Consider the following 99-residue polypeptide: MAEGDTLVSVDYEIFGKVQGVFFRKYTQAEGKKLGLVGWVQNTDRGTVQGQLQGPVSKVRFMQQWLETRGSPKSHIDRANFNNEKVIANLDYSDFQIVK.

Alanine 2 is modified (N-acetylalanine). Residues 9–99 (SVDYEIFGKV…LDYSDFQIVK (91 aa)) enclose the Acylphosphatase-like domain. Active-site residues include arginine 24 and asparagine 42.

This sequence belongs to the acylphosphatase family.

The enzyme catalyses an acyl phosphate + H2O = a carboxylate + phosphate + H(+). The protein is Acylphosphatase-1 (Acyp1) of Mus musculus (Mouse).